A 154-amino-acid polypeptide reads, in one-letter code: L-alanine exporter AlaE (154 aa).

Helical transmembrane passes span 21–41, 51–71, 90–110, and 115–135; these read FAMV…LSGM, LVAI…RDFF, ILAY…VIGA, and IVAA…VYGY.

This sequence belongs to the AlaE exporter family.

Its subcellular location is the cell inner membrane. Functionally, exports L-alanine. The chain is L-alanine exporter AlaE from Escherichia fergusonii (strain ATCC 35469 / DSM 13698 / CCUG 18766 / IAM 14443 / JCM 21226 / LMG 7866 / NBRC 102419 / NCTC 12128 / CDC 0568-73).